Here is a 284-residue protein sequence, read N- to C-terminus: D-tagatose-1,6-bisphosphate aldolase subunit GatY (284 aa).

Catalysis depends on aspartate 82, which acts as the Proton donor. Zn(2+)-binding residues include histidine 83 and histidine 180. Position 181 (glycine 181) interacts with dihydroxyacetone phosphate. Residue histidine 208 coordinates Zn(2+). Dihydroxyacetone phosphate contacts are provided by residues 209–211 (GAS) and 230–233 (NVAT).

Belongs to the class II fructose-bisphosphate aldolase family. TagBP aldolase GatY subfamily. Forms a complex with GatZ. It depends on Zn(2+) as a cofactor.

It carries out the reaction D-tagatofuranose 1,6-bisphosphate = D-glyceraldehyde 3-phosphate + dihydroxyacetone phosphate. The protein operates within carbohydrate metabolism; D-tagatose 6-phosphate degradation; D-glyceraldehyde 3-phosphate and glycerone phosphate from D-tagatose 6-phosphate: step 2/2. In terms of biological role, catalytic subunit of the tagatose-1,6-bisphosphate aldolase GatYZ, which catalyzes the reversible aldol condensation of dihydroxyacetone phosphate (DHAP or glycerone-phosphate) with glyceraldehyde 3-phosphate (G3P) to produce tagatose 1,6-bisphosphate (TBP). Requires GatZ subunit for full activity and stability. Is involved in the catabolism of galactitol. The sequence is that of D-tagatose-1,6-bisphosphate aldolase subunit GatY from Shigella boydii serotype 4 (strain Sb227).